The chain runs to 581 residues: Membrane protein insertase YidC (581 aa).

A helical transmembrane segment spans residues I7–Y27. A disordered region spans residues A41–P62. 5 consecutive transmembrane segments (helical) span residues T365–I385, L388–F408, L458–L478, W489–M509, and P536–V556.

The protein belongs to the OXA1/ALB3/YidC family. Type 1 subfamily. As to quaternary structure, interacts with the Sec translocase complex via SecD. Specifically interacts with transmembrane segments of nascent integral membrane proteins during membrane integration.

The protein resides in the cell inner membrane. Functionally, required for the insertion and/or proper folding and/or complex formation of integral membrane proteins into the membrane. Involved in integration of membrane proteins that insert both dependently and independently of the Sec translocase complex, as well as at least some lipoproteins. Aids folding of multispanning membrane proteins. The chain is Membrane protein insertase YidC from Ectopseudomonas mendocina (strain ymp) (Pseudomonas mendocina).